A 456-amino-acid polypeptide reads, in one-letter code: Adenylosuccinate lyase (456 aa).

N(6)-(1,2-dicarboxyethyl)-AMP-binding positions include 15 to 16, 90 to 92, and 122 to 123; these read RY, NHD, and TS. Catalysis depends on histidine 171, which acts as the Proton donor/acceptor. A N(6)-(1,2-dicarboxyethyl)-AMP-binding site is contributed by glutamine 247. Residue serine 295 is the Proton donor/acceptor of the active site. Residues serine 296, 301 to 303, asparagine 309, arginine 335, and 340 to 344 contribute to the N(6)-(1,2-dicarboxyethyl)-AMP site; these read KIN and STVLR.

It belongs to the lyase 1 family. Adenylosuccinate lyase subfamily. As to quaternary structure, homotetramer. Residues from neighboring subunits contribute catalytic and substrate-binding residues to each active site.

It carries out the reaction N(6)-(1,2-dicarboxyethyl)-AMP = fumarate + AMP. It catalyses the reaction (2S)-2-[5-amino-1-(5-phospho-beta-D-ribosyl)imidazole-4-carboxamido]succinate = 5-amino-1-(5-phospho-beta-D-ribosyl)imidazole-4-carboxamide + fumarate. It functions in the pathway purine metabolism; AMP biosynthesis via de novo pathway; AMP from IMP: step 2/2. Its pathway is purine metabolism; IMP biosynthesis via de novo pathway; 5-amino-1-(5-phospho-D-ribosyl)imidazole-4-carboxamide from 5-amino-1-(5-phospho-D-ribosyl)imidazole-4-carboxylate: step 2/2. Its function is as follows. Catalyzes two reactions in de novo purine nucleotide biosynthesis. Catalyzes the breakdown of 5-aminoimidazole- (N-succinylocarboxamide) ribotide (SAICAR or 2-[5-amino-1-(5-phospho-beta-D-ribosyl)imidazole-4-carboxamido]succinate) to 5-aminoimidazole-4-carboxamide ribotide (AICAR or 5-amino-1-(5-phospho-beta-D-ribosyl)imidazole-4-carboxamide) and fumarate, and of adenylosuccinate (ADS or N(6)-(1,2-dicarboxyethyl)-AMP) to adenosine monophosphate (AMP) and fumarate. The sequence is that of Adenylosuccinate lyase (purB) from Buchnera aphidicola subsp. Schizaphis graminum (strain Sg).